Here is a 408-residue protein sequence, read N- to C-terminus: 3-ketoacyl-CoA thiolase B, peroxisomal (408 aa).

C112 serves as the catalytic Acyl-thioester intermediate. Residues H366 and C394 each act as proton acceptor in the active site.

The protein belongs to the thiolase-like superfamily. Thiolase family. As to quaternary structure, homodimer.

The protein localises to the peroxisome. It catalyses the reaction an acyl-CoA + acetyl-CoA = a 3-oxoacyl-CoA + CoA. It participates in lipid metabolism; fatty acid metabolism. The polypeptide is 3-ketoacyl-CoA thiolase B, peroxisomal (Candida tropicalis (Yeast)).